Reading from the N-terminus, the 179-residue chain is Acireductone dioxygenase (179 aa).

Positions 7–26 are disordered; it reads MDDAPGDPRQPHRPDPGRPV. Fe(2+)-binding residues include His-88, His-90, Glu-94, and His-133. Ni(2+)-binding residues include His-88, His-90, Glu-94, and His-133.

The protein belongs to the acireductone dioxygenase (ARD) family. In terms of assembly, monomer. Interacts with MMP14. The cofactor is Fe(2+). Requires Ni(2+) as cofactor. As to expression, detected in heart, colon, lung, stomach, brain, spleen, liver, skeletal muscle and kidney.

It is found in the cytoplasm. Its subcellular location is the nucleus. The protein localises to the cell membrane. The catalysed reaction is 1,2-dihydroxy-5-(methylsulfanyl)pent-1-en-3-one + O2 = 4-methylsulfanyl-2-oxobutanoate + formate + 2 H(+). It carries out the reaction 1,2-dihydroxy-5-(methylsulfanyl)pent-1-en-3-one + O2 = 3-(methylsulfanyl)propanoate + CO + formate + 2 H(+). It participates in amino-acid biosynthesis; L-methionine biosynthesis via salvage pathway; L-methionine from S-methyl-5-thio-alpha-D-ribose 1-phosphate: step 5/6. In terms of biological role, catalyzes 2 different reactions between oxygen and the acireductone 1,2-dihydroxy-3-keto-5-methylthiopentene (DHK-MTPene) depending upon the metal bound in the active site. Fe-containing acireductone dioxygenase (Fe-ARD) produces formate and 2-keto-4-methylthiobutyrate (KMTB), the alpha-ketoacid precursor of methionine in the methionine recycle pathway. Ni-containing acireductone dioxygenase (Ni-ARD) produces methylthiopropionate, carbon monoxide and formate, and does not lie on the methionine recycle pathway. Also down-regulates cell migration mediated by MMP14. Necessary for hepatitis C virus replication in an otherwise non-permissive cell line. This chain is Acireductone dioxygenase, found in Homo sapiens (Human).